The following is a 344-amino-acid chain: tRNA N6-adenosine threonylcarbamoyltransferase (344 aa).

Residues H111 and H115 each contribute to the Fe cation site. Residues 134 to 138, D167, G180, and N272 each bind substrate; that span reads LVSGG. D300 contacts Fe cation.

This sequence belongs to the KAE1 / TsaD family. Requires Fe(2+) as cofactor.

Its subcellular location is the cytoplasm. The enzyme catalyses L-threonylcarbamoyladenylate + adenosine(37) in tRNA = N(6)-L-threonylcarbamoyladenosine(37) in tRNA + AMP + H(+). Functionally, required for the formation of a threonylcarbamoyl group on adenosine at position 37 (t(6)A37) in tRNAs that read codons beginning with adenine. Is involved in the transfer of the threonylcarbamoyl moiety of threonylcarbamoyl-AMP (TC-AMP) to the N6 group of A37, together with TsaE and TsaB. TsaD likely plays a direct catalytic role in this reaction. This is tRNA N6-adenosine threonylcarbamoyltransferase from Idiomarina loihiensis (strain ATCC BAA-735 / DSM 15497 / L2-TR).